Reading from the N-terminus, the 224-residue chain is Small ribosomal subunit protein uS3 (224 aa).

A KH type-2 domain is found at Leu-38–Arg-106.

It belongs to the universal ribosomal protein uS3 family. Part of the 30S ribosomal subunit. Forms a tight complex with proteins S10 and S14.

Functionally, binds the lower part of the 30S subunit head. Binds mRNA in the 70S ribosome, positioning it for translation. The chain is Small ribosomal subunit protein uS3 from Anaeromyxobacter dehalogenans (strain 2CP-C).